A 930-amino-acid polypeptide reads, in one-letter code: Translation initiation factor IF-2 (930 aa).

The segment at 51–325 (PGAGKSAAKP…TREIGGVKVP (275 aa)) is disordered. Low complexity-rich tracts occupy residues 56–111 (SAAK…KPGV) and 121–162 (TPAA…GNNP). Residues 263–295 (RPGGGPGGGPGRPGGPGGRGGRGNAQGAFGRGG) are compositionally biased toward gly residues. Residues 296–307 (GPRKGRKSKRAK) show a composition bias toward basic residues. Basic and acidic residues predominate over residues 308–320 (RQEFEQQHTREIG). The region spanning 422–596 (PRPAVVTVMG…LTADAALELT (175 aa)) is the tr-type G domain. The segment at 431-438 (GHVDHGKT) is G1. 431–438 (GHVDHGKT) lines the GTP pocket. The G2 stretch occupies residues 456-460 (GITQH). The G3 stretch occupies residues 481–484 (DTPG). GTP is bound by residues 481–485 (DTPGH) and 535–538 (NKID). The tract at residues 535-538 (NKID) is G4. A G5 region spans residues 571-573 (SAR).

This sequence belongs to the TRAFAC class translation factor GTPase superfamily. Classic translation factor GTPase family. IF-2 subfamily.

The protein resides in the cytoplasm. Functionally, one of the essential components for the initiation of protein synthesis. Protects formylmethionyl-tRNA from spontaneous hydrolysis and promotes its binding to the 30S ribosomal subunits. Also involved in the hydrolysis of GTP during the formation of the 70S ribosomal complex. The protein is Translation initiation factor IF-2 of Micrococcus luteus (strain ATCC 4698 / DSM 20030 / JCM 1464 / CCM 169 / CCUG 5858 / IAM 1056 / NBRC 3333 / NCIMB 9278 / NCTC 2665 / VKM Ac-2230) (Micrococcus lysodeikticus).